We begin with the raw amino-acid sequence, 163 residues long: Small ribosomal subunit protein bS18c (163 aa).

2 disordered regions span residues 1-54 (MYTS…PGDR) and 121-163 (ITGP…SSDC). Over residues 7 to 48 (PFHKSKQTFHKSKQTFRKSKQTFRKFKQPFRKPKQPFRRRPR) the composition is skewed to basic residues. Low complexity predominate over residues 140–163 (NSNRNLRNSNQTLRNNNRNLSSDC).

The protein belongs to the bacterial ribosomal protein bS18 family. As to quaternary structure, part of the 30S ribosomal subunit.

It is found in the plastid. It localises to the chloroplast. The chain is Small ribosomal subunit protein bS18c from Oryza nivara (Indian wild rice).